Reading from the N-terminus, the 316-residue chain is 4-hydroxy-3-methylbut-2-enyl diphosphate reductase (316 aa).

C12 is a binding site for [4Fe-4S] cluster. (2E)-4-hydroxy-3-methylbut-2-enyl diphosphate-binding residues include H41 and H74. Residues H41 and H74 each coordinate dimethylallyl diphosphate. H41 and H74 together coordinate isopentenyl diphosphate. C96 serves as a coordination point for [4Fe-4S] cluster. Residue H124 participates in (2E)-4-hydroxy-3-methylbut-2-enyl diphosphate binding. H124 contacts dimethylallyl diphosphate. H124 provides a ligand contact to isopentenyl diphosphate. The Proton donor role is filled by E126. T169 serves as a coordination point for (2E)-4-hydroxy-3-methylbut-2-enyl diphosphate. C199 provides a ligand contact to [4Fe-4S] cluster. Residues S227, S228, N229, and S271 each coordinate (2E)-4-hydroxy-3-methylbut-2-enyl diphosphate. Residues S227, S228, N229, and S271 each coordinate dimethylallyl diphosphate. Residues S227, S228, N229, and S271 each coordinate isopentenyl diphosphate.

This sequence belongs to the IspH family. It depends on [4Fe-4S] cluster as a cofactor.

The catalysed reaction is isopentenyl diphosphate + 2 oxidized [2Fe-2S]-[ferredoxin] + H2O = (2E)-4-hydroxy-3-methylbut-2-enyl diphosphate + 2 reduced [2Fe-2S]-[ferredoxin] + 2 H(+). The enzyme catalyses dimethylallyl diphosphate + 2 oxidized [2Fe-2S]-[ferredoxin] + H2O = (2E)-4-hydroxy-3-methylbut-2-enyl diphosphate + 2 reduced [2Fe-2S]-[ferredoxin] + 2 H(+). It participates in isoprenoid biosynthesis; dimethylallyl diphosphate biosynthesis; dimethylallyl diphosphate from (2E)-4-hydroxy-3-methylbutenyl diphosphate: step 1/1. Its pathway is isoprenoid biosynthesis; isopentenyl diphosphate biosynthesis via DXP pathway; isopentenyl diphosphate from 1-deoxy-D-xylulose 5-phosphate: step 6/6. In terms of biological role, catalyzes the conversion of 1-hydroxy-2-methyl-2-(E)-butenyl 4-diphosphate (HMBPP) into a mixture of isopentenyl diphosphate (IPP) and dimethylallyl diphosphate (DMAPP). Acts in the terminal step of the DOXP/MEP pathway for isoprenoid precursor biosynthesis. This Stenotrophomonas maltophilia (strain R551-3) protein is 4-hydroxy-3-methylbut-2-enyl diphosphate reductase.